We begin with the raw amino-acid sequence, 97 residues long: DNA-binding protein NEQ150 (97 aa).

It belongs to the PDCD5 family.

The chain is DNA-binding protein NEQ150 from Nanoarchaeum equitans (strain Kin4-M).